Reading from the N-terminus, the 504-residue chain is Glucose-6-phosphate isomerase (504 aa).

E333 (proton donor) is an active-site residue. Active-site residues include H364 and K473.

The protein belongs to the GPI family.

The protein resides in the cytoplasm. It catalyses the reaction alpha-D-glucose 6-phosphate = beta-D-fructose 6-phosphate. It participates in carbohydrate biosynthesis; gluconeogenesis. The protein operates within carbohydrate degradation; glycolysis; D-glyceraldehyde 3-phosphate and glycerone phosphate from D-glucose: step 2/4. In terms of biological role, catalyzes the reversible isomerization of glucose-6-phosphate to fructose-6-phosphate. This Xanthomonas euvesicatoria pv. vesicatoria (strain 85-10) (Xanthomonas campestris pv. vesicatoria) protein is Glucose-6-phosphate isomerase.